We begin with the raw amino-acid sequence, 45 residues long: Bacteriocin fulvocin-C (45 aa).

Bacteriocin. The polypeptide is Bacteriocin fulvocin-C (Myxococcus fulvus).